Consider the following 214-residue polypeptide: Adenylate kinase (214 aa).

ATP is bound at residue 10–15 (GAGKGT). The tract at residues 30-59 (STGDMLRGAIKAGTDLGKQAKTLMDAGQLV) is NMP. Residues threonine 31, arginine 36, 57–59 (QLV), 85–88 (GFPR), and glutamine 92 each bind AMP. An LID region spans residues 122–159 (GRRVHQASGRTYHVVYNPPKVEGKDDVTGEDLIIRADD). ATP contacts are provided by residues arginine 123 and 132 to 133 (TY). Residues arginine 156 and arginine 167 each contribute to the AMP site. Lysine 200 serves as a coordination point for ATP.

This sequence belongs to the adenylate kinase family. As to quaternary structure, monomer.

It localises to the cytoplasm. It catalyses the reaction AMP + ATP = 2 ADP. Its pathway is purine metabolism; AMP biosynthesis via salvage pathway; AMP from ADP: step 1/1. In terms of biological role, catalyzes the reversible transfer of the terminal phosphate group between ATP and AMP. Plays an important role in cellular energy homeostasis and in adenine nucleotide metabolism. In Pasteurella multocida (strain Pm70), this protein is Adenylate kinase.